Reading from the N-terminus, the 290-residue chain is 4-hydroxybenzoate octaprenyltransferase (290 aa).

Helical transmembrane passes span 20 to 40, 43 to 63, 92 to 112, 114 to 131, 135 to 155, 160 to 180, 209 to 229, 231 to 251, and 266 to 286; these read IGIL…AEGV, LDIL…GCVV, EALL…QPLN, LTIE…SYPF, FFAM…PMAF, GEVP…VIAY, VVGV…IGLL, NLGV…LYQY, and FLHN…DYLV.

Belongs to the UbiA prenyltransferase family. Mg(2+) is required as a cofactor.

It localises to the cell inner membrane. The enzyme catalyses all-trans-octaprenyl diphosphate + 4-hydroxybenzoate = 4-hydroxy-3-(all-trans-octaprenyl)benzoate + diphosphate. Its pathway is cofactor biosynthesis; ubiquinone biosynthesis. In terms of biological role, catalyzes the prenylation of para-hydroxybenzoate (PHB) with an all-trans polyprenyl group. Mediates the second step in the final reaction sequence of ubiquinone-8 (UQ-8) biosynthesis, which is the condensation of the polyisoprenoid side chain with PHB, generating the first membrane-bound Q intermediate 3-octaprenyl-4-hydroxybenzoate. This chain is 4-hydroxybenzoate octaprenyltransferase, found in Nitrosospira multiformis (strain ATCC 25196 / NCIMB 11849 / C 71).